The primary structure comprises 198 residues: uncharacterized protein (198 aa).

A disordered region spans residues 51–74; it reads EEPDNGDDRGSRRTTGQGRKWAAH.

This is an uncharacterized protein from Homo sapiens (Human).